The chain runs to 152 residues: Putative pre-16S rRNA nuclease (152 aa).

The protein belongs to the YqgF nuclease family.

Its subcellular location is the cytoplasm. Functionally, could be a nuclease involved in processing of the 5'-end of pre-16S rRNA. In Nitrosococcus oceani (strain ATCC 19707 / BCRC 17464 / JCM 30415 / NCIMB 11848 / C-107), this protein is Putative pre-16S rRNA nuclease.